Here is a 2003-residue protein sequence, read N- to C-terminus: Neurogenic locus notch homolog protein 4 (2003 aa).

A signal peptide spans 1 to 23 (MQPPSLLLLLLLLLLLCVSVVRP). EGF-like domains lie at 24 to 63 (RGLL…ETCQ), 64 to 115 (FPDP…ERCQ), 118 to 155 (LEDP…EQCQ), and 156 to 192 (LRDF…HACE). The Extracellular portion of the chain corresponds to 24 to 1447 (RGLLCGSFPE…TAPPANQLPW (1424 aa)). 48 cysteine pairs are disulfide-bonded: cysteine 28-cysteine 41, cysteine 35-cysteine 51, cysteine 53-cysteine 62, cysteine 68-cysteine 80, cysteine 74-cysteine 103, cysteine 105-cysteine 114, cysteine 122-cysteine 133, cysteine 127-cysteine 143, cysteine 145-cysteine 154, cysteine 160-cysteine 171, cysteine 165-cysteine 180, cysteine 182-cysteine 191, cysteine 198-cysteine 211, cysteine 205-cysteine 220, cysteine 222-cysteine 231, cysteine 238-cysteine 249, cysteine 243-cysteine 262, cysteine 264-cysteine 273, cysteine 280-cysteine 291, cysteine 285-cysteine 300, cysteine 302-cysteine 311, cysteine 318-cysteine 332, cysteine 326-cysteine 341, cysteine 343-cysteine 352, cysteine 359-cysteine 370, cysteine 364-cysteine 379, cysteine 381-cysteine 390, cysteine 396-cysteine 407, cysteine 401-cysteine 418, cysteine 420-cysteine 429, cysteine 436-cysteine 452, cysteine 446-cysteine 461, cysteine 463-cysteine 472, cysteine 479-cysteine 490, cysteine 484-cysteine 499, cysteine 501-cysteine 510, cysteine 517-cysteine 528, cysteine 522-cysteine 537, cysteine 539-cysteine 548, cysteine 555-cysteine 566, cysteine 560-cysteine 575, cysteine 577-cysteine 586, cysteine 593-cysteine 604, cysteine 598-cysteine 613, cysteine 615-cysteine 624, cysteine 629-cysteine 640, cysteine 634-cysteine 649, and cysteine 651-cysteine 658. Residues 194–232 (DVNECFQDPGPCPKGTSCHNTLGSFQCLCPVGQEGPRCE) form the EGF-like 5; calcium-binding domain. The EGF-like 6 domain occupies 234–274 (RAGPCPPRGCSNGGTCQLMPEKDSTFHLCLCPPGFIGPDCE). An EGF-like 7; calcium-binding domain is found at 276–312 (NPDNCVSHQCQNGGTCQDGLDTYTCLCPETWTGWDCS). In terms of domain architecture, EGF-like 8; calcium-binding spans 314–353 (DVDECETQGPPHCRNGGTCQNSAGSFHCVCVSGWGGTSCE). The EGF-like 9; calcium-binding domain maps to 355–391 (NLDDCIAATCAPGSTCIDRVGSFSCLCPPGRTGLLCH). Residues 392 to 430 (LEDMCLSQPCHGDAQCSTNPLTGSTLCLCQPGYSGPTCH) enclose the EGF-like 10 domain. One can recognise an EGF-like 11; calcium-binding domain in the interval 432-473 (DLDECLMAQQGPSPCEHGGSCLNTPGSFNCLCPPGYTGSRCE). One can recognise an EGF-like 12; calcium-binding domain in the interval 475–511 (DHNECLSQPCHPGSTCLDLLATFHCLCPPGLEGQLCE). One can recognise an EGF-like 13; calcium-binding domain in the interval 513 to 549 (ETNECASAPCLNHADCHDLLNGFQCICLPGFSGTRCE). One can recognise an EGF-like 14; calcium-binding domain in the interval 551–587 (DIDECRSSPCANGGQCQDQPGAFHCKCLPGFEGPRCQ). The EGF-like 15; calcium-binding domain occupies 589-625 (EVDECLSDPCPVGASCLDLPGAFFCLCPSGFTGQLCE). EGF-like domains are found at residues 626–659 (VPLC…PGCA), 661–689 (PEDN…PECE), 691–727 (ELGG…PTCS), 729–765 (EMTA…PQCQ), 767–803 (STDY…PRCE), 806–842 (LRPS…GSCQ), 844–880 (LMDL…PLCN), 882–928 (PLSS…SLCQ), 930–966 (HVNP…QNCS), 968–1004 (ELDA…LRCE), 1006–1044 (DVDE…QWCE), 1046–1085 (EIDP…PTCS), 1087–1126 (RAPS…PDCL), and 1130–1171 (APKG…PRCQ). The N-linked (GlcNAc...) asparagine glycan is linked to asparagine 664. Intrachain disulfides connect cysteine 665–cysteine 672, cysteine 667–cysteine 677, cysteine 679–cysteine 688, cysteine 695–cysteine 706, cysteine 700–cysteine 715, cysteine 717–cysteine 726, cysteine 733–cysteine 744, cysteine 738–cysteine 753, cysteine 755–cysteine 764, cysteine 771–cysteine 782, cysteine 776–cysteine 791, cysteine 793–cysteine 802, cysteine 810–cysteine 821, cysteine 815–cysteine 830, cysteine 832–cysteine 841, cysteine 848–cysteine 859, cysteine 853–cysteine 868, cysteine 870–cysteine 879, cysteine 886–cysteine 907, cysteine 901–cysteine 916, cysteine 918–cysteine 927, cysteine 934–cysteine 945, cysteine 939–cysteine 954, cysteine 956–cysteine 965, cysteine 972–cysteine 983, cysteine 977–cysteine 992, cysteine 994–cysteine 1003, cysteine 1010–cysteine 1023, cysteine 1015–cysteine 1032, cysteine 1034–cysteine 1043, cysteine 1050–cysteine 1061, cysteine 1055–cysteine 1073, cysteine 1075–cysteine 1084, cysteine 1091–cysteine 1102, cysteine 1096–cysteine 1114, cysteine 1116–cysteine 1125, cysteine 1134–cysteine 1146, cysteine 1140–cysteine 1159, cysteine 1161–cysteine 1170, cysteine 1178–cysteine 1191, cysteine 1187–cysteine 1203, cysteine 1214–cysteine 1238, cysteine 1220–cysteine 1233, cysteine 1229–cysteine 1245, cysteine 1251–cysteine 1277, cysteine 1259–cysteine 1272, and cysteine 1268–cysteine 1284. Asparagine 714 is a glycosylation site (N-linked (GlcNAc...) asparagine). Asparagine 964 is a glycosylation site (N-linked (GlcNAc...) asparagine). A glycan (N-linked (GlcNAc...) asparagine) is linked at asparagine 1143. 3 LNR repeats span residues 1170 to 1213 (CQKP…PWKG), 1214 to 1250 (CPSH…TPPA), and 1251 to 1294 (CTPA…PEWG). Residues 1347 to 1371 (AEEKLGGTRDPTYQERAAPQTQPLG) form a disordered region. The chain crosses the membrane as a helical span at residues 1448 to 1468 (PVLCSPVAGVILLALGALLVL). Topologically, residues 1469 to 2003 (QLIRRRRREH…PINQGGEGKK (535 aa)) are cytoplasmic. The tract at residues 1485-1508 (PGFTRRPRTQSAPHRRRPPLGEDS) is disordered. The segment covering 1489–1502 (RRPRTQSAPHRRRP) has biased composition (basic residues). 5 ANK repeats span residues 1633 to 1665 (TGET…QPDR), 1666 to 1698 (AGRT…DART), 1700 to 1732 (DGTT…ARDK), 1733 to 1765 (WGKT…AQDN), and 1766 to 1798 (REQT…LRDQ). 2 disordered regions span residues 1900–1927 (LSGV…RPNP) and 1968–2003 (PPPC…EGKK).

Belongs to the NOTCH family. In terms of assembly, heterodimer of a C-terminal fragment N(TM) and a N-terminal fragment N(EC) which are probably linked by disulfide bonds. Interacts with MAML1, MAML2 and MAML3 which act as transcriptional coactivators for NOTCH4. (Microbial infection) Interacts with Epstein-Barr virus (EBV) RK-BARF0. Synthesized in the endoplasmic reticulum as an inactive form which is proteolytically cleaved by a furin-like convertase in the trans-Golgi network before it reaches the plasma membrane to yield an active, ligand-accessible form. Cleavage results in a C-terminal fragment N(TM) and a N-terminal fragment N(EC). Following ligand binding, it is cleaved by TNF-alpha converting enzyme (TACE) to yield a membrane-associated intermediate fragment called notch extracellular truncation (NEXT). This fragment is then cleaved by presenilin dependent gamma-secretase to release a notch-derived peptide containing the intracellular domain (NICD) from the membrane. In terms of processing, phosphorylated. In terms of tissue distribution, highly expressed in the heart, moderately in the lung and placenta and at low levels in the liver, skeletal muscle, kidney, pancreas, spleen, lymph node, thymus, bone marrow and fetal liver. No expression was seen in adult brain or peripheral blood leukocytes.

It is found in the cell membrane. Its subcellular location is the nucleus. Its function is as follows. Functions as a receptor for membrane-bound ligands Jagged1, Jagged2 and Delta1 to regulate cell-fate determination. Upon ligand activation through the released notch intracellular domain (NICD) it forms a transcriptional activator complex with RBPJ/RBPSUH and activates genes of the enhancer of split locus. Affects the implementation of differentiation, proliferation and apoptotic programs. May regulate branching morphogenesis in the developing vascular system. The chain is Neurogenic locus notch homolog protein 4 from Homo sapiens (Human).